Reading from the N-terminus, the 908-residue chain is Protein O-mannosyltransferase 1 (908 aa).

Disordered regions lie at residues 1-85 (MYNN…SAIN) and 115-160 (GSVE…SGSR). Residues 21 to 31 (QRRKTTTRSRS) show a composition bias toward basic residues. Polar residues-rich tracts occupy residues 39 to 54 (CTSE…NGAQ) and 132 to 149 (LTAT…SPTI). The helical transmembrane segment at 190-210 (FTVNLSIDLFSWTLFLLAFCT) threads the bilayer. An N-linked (GlcNAc...) asparagine glycan is attached at Asn265. Helical transmembrane passes span 279–299 (VPIF…APAV), 311–328 (WAAA…SLLT), 331–351 (RFVL…ACLL), 370–390 (AGVL…ALAL), and 418–438 (LSRL…VFYV). MIR domains follow at residues 473–534 (PLAV…VKRP), 545–602 (PDVI…VEIL), and 608–664 (GDSW…VEEH). 4 consecutive transmembrane segments (helical) span residues 749 to 769 (VLIW…LAFY), 788 to 808 (FLMA…PYYF), 813 to 833 (LFLH…CFVV), and 857 to 877 (LALL…LPLS).

Belongs to the glycosyltransferase 39 family. As to quaternary structure, interacts with tw/POMT2.

The protein resides in the endoplasmic reticulum membrane. It catalyses the reaction a di-trans,poly-cis-dolichyl beta-D-mannosyl phosphate + L-seryl-[protein] = 3-O-(alpha-D-mannosyl)-L-seryl-[protein] + a di-trans,poly-cis-dolichyl phosphate + H(+). It carries out the reaction a di-trans,poly-cis-dolichyl beta-D-mannosyl phosphate + L-threonyl-[protein] = 3-O-(alpha-D-mannosyl)-L-threonyl-[protein] + a di-trans,poly-cis-dolichyl phosphate + H(+). It participates in protein modification; protein glycosylation. Its function is as follows. Rt/POMT1 and tw/POMT2 function as a protein O-mannosyltransferase in association with each other to generate and maintain normal muscle development. This Drosophila pseudoobscura pseudoobscura (Fruit fly) protein is Protein O-mannosyltransferase 1.